Here is a 430-residue protein sequence, read N- to C-terminus: UDP-N-acetylglucosamine 1-carboxyvinyltransferase (430 aa).

Residue lysine 22 to asparagine 23 coordinates phosphoenolpyruvate. Residue arginine 102 participates in UDP-N-acetyl-alpha-D-glucosamine binding. Cysteine 126 (proton donor) is an active-site residue. Residue cysteine 126 is modified to 2-(S-cysteinyl)pyruvic acid O-phosphothioketal. UDP-N-acetyl-alpha-D-glucosamine is bound by residues arginine 131–leucine 135, lysine 172–valine 175, aspartate 317, and isoleucine 339.

Belongs to the EPSP synthase family. MurA subfamily.

The protein localises to the cytoplasm. The enzyme catalyses phosphoenolpyruvate + UDP-N-acetyl-alpha-D-glucosamine = UDP-N-acetyl-3-O-(1-carboxyvinyl)-alpha-D-glucosamine + phosphate. Its pathway is cell wall biogenesis; peptidoglycan biosynthesis. Cell wall formation. Adds enolpyruvyl to UDP-N-acetylglucosamine. This Rhizobium johnstonii (strain DSM 114642 / LMG 32736 / 3841) (Rhizobium leguminosarum bv. viciae) protein is UDP-N-acetylglucosamine 1-carboxyvinyltransferase.